The primary structure comprises 586 residues: Phosphomethylpyrimidine synthase (586 aa).

The interval 1 to 59 is disordered; sequence MKQSVSAEQIELKSSLPGSKKVYVDGPREGMKVPMREIEQSDTNGVPNPPIRVYDTSGP. Residues 22–39 are compositionally biased toward basic and acidic residues; that stretch reads VYVDGPREGMKVPMREIE. Residues Asn-193, Met-222, Tyr-251, His-287, 307-309, 348-351, and Glu-387 contribute to the substrate site; these read SRG and DGLR. His-391 contributes to the Zn(2+) binding site. Residue Tyr-414 participates in substrate binding. His-455 serves as a coordination point for Zn(2+). [4Fe-4S] cluster contacts are provided by Cys-535, Cys-538, and Cys-543.

The protein belongs to the ThiC family. Requires [4Fe-4S] cluster as cofactor.

The catalysed reaction is 5-amino-1-(5-phospho-beta-D-ribosyl)imidazole + S-adenosyl-L-methionine = 4-amino-2-methyl-5-(phosphooxymethyl)pyrimidine + CO + 5'-deoxyadenosine + formate + L-methionine + 3 H(+). It participates in cofactor biosynthesis; thiamine diphosphate biosynthesis. Catalyzes the synthesis of the hydroxymethylpyrimidine phosphate (HMP-P) moiety of thiamine from aminoimidazole ribotide (AIR) in a radical S-adenosyl-L-methionine (SAM)-dependent reaction. The protein is Phosphomethylpyrimidine synthase of Bacillus cereus (strain Q1).